A 364-amino-acid chain; its full sequence is Ribosomal RNA large subunit methyltransferase M (364 aa).

Residues Ser-198, 231–234 (APGG), Asp-250, Asp-270, and Asp-286 contribute to the S-adenosyl-L-methionine site. Residue Lys-315 is the Proton acceptor of the active site.

This sequence belongs to the class I-like SAM-binding methyltransferase superfamily. RNA methyltransferase RlmE family. RlmM subfamily. In terms of assembly, monomer.

It localises to the cytoplasm. The enzyme catalyses cytidine(2498) in 23S rRNA + S-adenosyl-L-methionine = 2'-O-methylcytidine(2498) in 23S rRNA + S-adenosyl-L-homocysteine + H(+). Functionally, catalyzes the 2'-O-methylation at nucleotide C2498 in 23S rRNA. In Azoarcus sp. (strain BH72), this protein is Ribosomal RNA large subunit methyltransferase M.